We begin with the raw amino-acid sequence, 75 residues long: Transcription attenuation protein MtrB (75 aa).

It belongs to the MtrB family. Oligomer of 11 identical subunits arranged in doughnut-like structure.

Required for transcription attenuation control in the Trp operon. This trans-acting factor seems to recognize a 10 bases nucleotide sequence in the Trp leader transcript causing transcription termination. Binds the leader RNA only in presence of L-tryptophan. In Bacillus velezensis (strain DSM 23117 / BGSC 10A6 / LMG 26770 / FZB42) (Bacillus amyloliquefaciens subsp. plantarum), this protein is Transcription attenuation protein MtrB.